Reading from the N-terminus, the 567-residue chain is DNA ligase B (567 aa).

The N6-AMP-lysine intermediate role is filled by Lys132.

This sequence belongs to the NAD-dependent DNA ligase family. LigB subfamily.

The catalysed reaction is NAD(+) + (deoxyribonucleotide)n-3'-hydroxyl + 5'-phospho-(deoxyribonucleotide)m = (deoxyribonucleotide)n+m + AMP + beta-nicotinamide D-nucleotide.. In terms of biological role, catalyzes the formation of phosphodiester linkages between 5'-phosphoryl and 3'-hydroxyl groups in double-stranded DNA using NAD as a coenzyme and as the energy source for the reaction. The polypeptide is DNA ligase B (Yersinia pestis).